Here is a 268-residue protein sequence, read N- to C-terminus: Aminoglycoside 3'-phosphotransferase (268 aa).

D188 functions as the Proton acceptor in the catalytic mechanism.

The protein belongs to the aminoglycoside phosphotransferase family.

The enzyme catalyses kanamycin A + ATP = kanamycin 3'-phosphate + ADP + H(+). Its function is as follows. Resistance to kanamycin and structurally-related aminoglycosides, including amikacin. This chain is Aminoglycoside 3'-phosphotransferase (aph), found in Streptomyces fradiae (Streptomyces roseoflavus).